Reading from the N-terminus, the 293-residue chain is Ribonuclease HIII (293 aa).

An RNase H type-2 domain is found at 78–293 (LPLIGTDEVG…TEKAKKRLER (216 aa)). A divalent metal cation is bound by residues Asp-84, Glu-85, and Asp-187.

The protein belongs to the RNase HII family. RnhC subfamily. The cofactor is Mn(2+). Mg(2+) is required as a cofactor.

It localises to the cytoplasm. It carries out the reaction Endonucleolytic cleavage to 5'-phosphomonoester.. In terms of biological role, endonuclease that specifically degrades the RNA of RNA-DNA hybrids. The chain is Ribonuclease HIII from Streptococcus pneumoniae (strain JJA).